The primary structure comprises 637 residues: DNA primase (637 aa).

A CHC2-type zinc finger spans residues 39–63 (CPFHGEKTPSFNVNAEKGFYHCFGC). The region spanning 257-338 (HEVYLMEGFM…QIVKVPEGLD (82 aa)) is the Toprim domain. Residues glutamate 263, aspartate 307, and aspartate 309 each contribute to the Mg(2+) site.

This sequence belongs to the DnaG primase family. Monomer. Interacts with DnaB. Zn(2+) is required as a cofactor. It depends on Mg(2+) as a cofactor.

It carries out the reaction ssDNA + n NTP = ssDNA/pppN(pN)n-1 hybrid + (n-1) diphosphate.. RNA polymerase that catalyzes the synthesis of short RNA molecules used as primers for DNA polymerase during DNA replication. In Lactococcus lactis subsp. lactis (strain IL1403) (Streptococcus lactis), this protein is DNA primase.